The chain runs to 218 residues: Glutathione S-transferase Mu 4 (218 aa).

Positions 1-88 constitute a GST N-terminal domain; that stretch reads MPMTLGYWDI…YIARKHNLCG (88 aa). Residues 7-8, 46-50, 59-60, and 72-73 each bind glutathione; these read YW, WLSEK, NL, and QS. In terms of domain architecture, GST C-terminal spans 90–208; sequence TEEEKIRVDI…KTSRFLRTPL (119 aa). A substrate-binding site is contributed by Y116.

This sequence belongs to the GST superfamily. Mu family. Homodimer. Widely expressed.

It is found in the cytoplasm. It catalyses the reaction RX + glutathione = an S-substituted glutathione + a halide anion + H(+). It carries out the reaction 1-chloro-2,4-dinitrobenzene + glutathione = 2,4-dinitrophenyl-S-glutathione + chloride + H(+). The enzyme catalyses (13S,14S)-epoxy-(4Z,7Z,9E,11E,16Z,19Z)-docosahexaenoate + glutathione = (13R)-S-glutathionyl-(14S)-hydroxy-(4Z,7Z,9E,11E,16Z,19Z)-docosahexaenoate. The catalysed reaction is leukotriene C4 = leukotriene A4 + glutathione. Conjugation of reduced glutathione to a wide number of exogenous and endogenous hydrophobic electrophiles. Catalyzes the conjugation of leukotriene A4 with reduced glutathione (GSH) to form leukotriene C4. Can also catalyze the transfer of a glutathionyl group from glutathione (GSH) to 13(S),14(S)-epoxy-docosahexaenoic acid to form maresin conjugate in tissue regeneration 1 (MCTR1), a bioactive lipid mediator that possess potent anti-inflammatory and proresolving actions. This chain is Glutathione S-transferase Mu 4, found in Mus musculus (Mouse).